The chain runs to 145 residues: Protein FimA (145 aa).

The protein belongs to the fimbrial protein family.

Its subcellular location is the fimbrium. The polypeptide is Protein FimA (fimA) (Bordetella pertussis).